A 525-amino-acid chain; its full sequence is Vesicular inhibitory amino acid transporter (525 aa).

Residues 1–132 (MATLLRSKLT…WNVTNAIQGM (132 aa)) are Cytoplasmic-facing. Residues 133–153 (FVLGLPYAILHGGYLGLFLII) traverse the membrane as a helical segment. The Lumenal, vesicle segment spans residues 154–204 (FAAVVCCYTGKILIACLYEENEDGEVVRVRDSYVAIANACCAPRFPTLGGR). Tyr186 is modified (3'-nitrotyrosine). A helical transmembrane segment spans residues 205–225 (VVNVAQIIELVMTCILYVVVS). At 226–265 (GNLMYNSFPGLPVSQKSWSIIATAVLLPCAFLKNLKAVSK) the chain is on the cytoplasmic side. The helical transmembrane segment at 266-286 (FSLLCTLAHFVINILVIAYCL) threads the bilayer. At 287–305 (SRARDWAWEKVKFYIDVKK) the chain is on the lumenal, vesicle side. The helical transmembrane segment at 306 to 326 (FPISIGIIVFSYTSQIFLPSL) threads the bilayer. At 327-341 (EGNMQQPSEFHCMMN) the chain is on the cytoplasmic side. The chain crosses the membrane as a helical span at residues 342–362 (WTHIAACVLKGLFALVAYLTW). The Lumenal, vesicle segment spans residues 363 to 383 (ADETKEVITDNLPGSIRAVVN). A helical membrane pass occupies residues 384 to 404 (IFLVAKALLSYPLPFFAAVEV). Residues 405 to 438 (LEKSLFQEGSRAFFPACYGGDGRLKSWGLTLRCA) lie on the Cytoplasmic side of the membrane. A helical transmembrane segment spans residues 439–459 (LVVFTLLMAIYVPHFALLMGL). The Lumenal, vesicle portion of the chain corresponds to 460-461 (TG). Residues 462–482 (SLTGAGLCFLLPSLFHLRLLW) form a helical membrane-spanning segment. The Cytoplasmic segment spans residues 483–489 (RKLLWHQ). A helical transmembrane segment spans residues 490–510 (VFFDVAIFVIGGICSVSGFVH). Topologically, residues 511–525 (SLEGLIEAYRTNAED) are lumenal, vesicle.

It belongs to the amino acid/polyamine transporter 2 family. As to expression, brain. Expressed at high levels within the neocortex, hippocampus, cerebellum, striatum, septal nuclei and the reticular nucleus of the thalamus. Also expressed in islets where it is more abundant in the peripheral/mantle region. Highly expressed in the nerve endings of GABA neurons in the brain and spinal cord but also in glycinergic nerve endings. Expressed in glycine-, GABA- or GABA- and glycine-containing boutons.

The protein localises to the cytoplasmic vesicle. Its subcellular location is the secretory vesicle. It localises to the synaptic vesicle membrane. It is found in the presynapse. The catalysed reaction is beta-alanine(out) + n H(+)(in) = beta-alanine(in) + n H(+)(out). It catalyses the reaction 4-aminobutanoate(out) + n H(+)(in) = 4-aminobutanoate(in) + n H(+)(out). It carries out the reaction glycine(out) + n H(+)(in) = glycine(in) + n H(+)(out). In terms of biological role, antiporter that exchanges vesicular protons for cytosolic 4-aminobutanoate or to a lesser extend glycine, thus allowing their secretion from nerve terminals. The transport is equally dependent on the chemical and electrical components of the proton gradient. May also transport beta-alanine. Acidification of GABAergic synaptic vesicles is a prerequisite for 4-aminobutanoate uptake. The chain is Vesicular inhibitory amino acid transporter from Rattus norvegicus (Rat).